The sequence spans 883 residues: METNVPEKKILGFPEEMNSTIQFLSVEKTTCRLPVSIKFNIPKKISTKRRRISVEEEEEEEDENKTKLSSWEKVLSSDEILRLREVSRRKYLTDRENKKVEELRDERKDDDDVEGYRFPDAYDQEGCIDQKKRFDVAKERYCERRRSGRVVTEQEAWEDHQAQKARVRFGAKDKKQVVDGYEFVFDDLTGFVEESSEAETGKHRGCYSKTAAEKAREGREFLPIHGYREELLKLIEENQVLVIVGETGSGKTTQIPQYLQEAGYTKRGKIGCTQPRRVAAMSVASRVAQEVGVKLGHEVGYSIRFEDCTSEKTVIKYMTDGMLLRELLIEPKLDSYSVIIIDEAHERTLSTDILFALVKDVAKVRPDLRLIISSATLEAKKFSEYFDSARIYLIPGRRYPVEKLFRKCPEPDYLETVIRTVVQIHQTEAIGDILVFLTGQEEIETVETNLKRRMMDLGTKGSEIIICPIYSNLPTPLQAKVFEPAPKGTRKVVLATNIAETSLTIDGVKYVIDPGYCKINSYNPRTGMESLLVTPISKASAAQRAGRSGRTGPGKCFRLYNIKDLEPTTIPEIQRANLASVVLTLKSLGIQDVFNFDFMDPPPENALLKALELLYALGALDEIGEITKVGERMVEFPVDPMLSKMIVGSEKYKCSKEIITIAAMLSVGNSVFYRPKNQQVFADKARMDFYEDTENVGDHIALLRVYNSWKEENYSTQWCCEKFIQSKSMKRARDIRDQLLGLLNKIGVELTSNPNDLDAIKKAILAGFFPHSAKLQKNGSYRRVKEPQTVYVHPNSGLFGASPSKWLVYHELVLTTKEYMRHTTEMKPEWLIEIAPHYYKLKDIEDTRPKKTQRRIEEASTSKVDTNKKTRTSKVDTNKKSKR.

The Helicase ATP-binding domain occupies 232 to 395 (LKLIEENQVL…FDSARIYLIP (164 aa)). 245–252 (GETGSGKT) serves as a coordination point for ATP. A DEAH box motif is present at residues 342-345 (DEAH). A Helicase C-terminal domain is found at 416 to 589 (TVIRTVVQIH…SVVLTLKSLG (174 aa)). A disordered region spans residues 845 to 883 (EDTRPKKTQRRIEEASTSKVDTNKKTRTSKVDTNKKSKR).

The protein belongs to the DEAD box helicase family. DEAH subfamily. PRP2 sub-subfamily. In terms of tissue distribution, predominantly expressed in flowers.

The enzyme catalyses ATP + H2O = ADP + phosphate + H(+). Functionally, may be involved in pre-mRNA splicing. The polypeptide is Probable pre-mRNA-splicing factor ATP-dependent RNA helicase DEAH8 (Arabidopsis thaliana (Mouse-ear cress)).